Here is a 176-residue protein sequence, read N- to C-terminus: 4-hydroxylaminobenzoate lyase (176 aa).

It belongs to the PnbB family.

The catalysed reaction is 4-hydroxylaminobenzoate + H2O + H(+) = 3,4-dihydroxybenzoate + NH4(+). In terms of biological role, lyase involved in the degradation of nitroaromatic compounds. Catalyzes the conversion of 4-hydroxylaminobenzoate to 3,4-dihydroxybenzoate (protocatechuate). Required for the catabolism of 4-nitrotoluene. This Pseudomonas putida (Arthrobacter siderocapsulatus) protein is 4-hydroxylaminobenzoate lyase.